The primary structure comprises 305 residues: Nuclear egress protein 1 (305 aa).

Residues 1–11 (MDRERPRKTRE) show a composition bias toward basic and acidic residues. Residues 1-24 (MDRERPRKTREPASPGSVLSKRSK) form a disordered region. The segment at 104-230 (CLVLSPLGHA…FALFKTDDLH (127 aa)) adopts a CCCH-type zinc-finger fold.

The protein belongs to the herpesviridae NEC1 protein family. As to quaternary structure, forms a heterohexameric complex with NEC2. Interacts with capsid vertex specific component 2/CVC2; this interaction directs the capsid to the host inner nuclear membrane to initiate budding. In terms of processing, phosphorylated at serine residues in the N-terminus. This phosphorylation regulates the localization within the inner nuclear membrane.

Its subcellular location is the host nucleus inner membrane. Plays an essential role in virion nuclear egress, the first step of virion release from infected cell. Within the host nucleus, NEC1 interacts with the newly formed capsid through the vertexes and directs it to the inner nuclear membrane by associating with NEC2. Induces the budding of the capsid at the inner nuclear membrane as well as its envelopment into the perinuclear space. There, the NEC1/NEC2 complex promotes the fusion of the enveloped capsid with the outer nuclear membrane and the subsequent release of the viral capsid into the cytoplasm where it will reach the secondary budding sites in the host Golgi or trans-Golgi network. This chain is Nuclear egress protein 1, found in Equus caballus (Horse).